The primary structure comprises 647 residues: Acetyl-coenzyme A synthetase (647 aa).

Residues 190-193, Thr-308, and Asn-332 contribute to the CoA site; that span reads RGGR. Residues 384–386, 408–413, Asp-497, and Arg-512 each bind ATP; these read GEP and DTWWQT. Ser-520 is a binding site for CoA. Arg-523 serves as a coordination point for ATP. Residues Val-534, His-536, and Val-539 each contribute to the Mg(2+) site. Arg-581 provides a ligand contact to CoA. The residue at position 606 (Lys-606) is an N6-acetyllysine.

Belongs to the ATP-dependent AMP-binding enzyme family. The cofactor is Mg(2+). Post-translationally, acetylated. Deacetylation by the SIR2-homolog deacetylase activates the enzyme.

It catalyses the reaction acetate + ATP + CoA = acetyl-CoA + AMP + diphosphate. In terms of biological role, catalyzes the conversion of acetate into acetyl-CoA (AcCoA), an essential intermediate at the junction of anabolic and catabolic pathways. AcsA undergoes a two-step reaction. In the first half reaction, AcsA combines acetate with ATP to form acetyl-adenylate (AcAMP) intermediate. In the second half reaction, it can then transfer the acetyl group from AcAMP to the sulfhydryl group of CoA, forming the product AcCoA. The protein is Acetyl-coenzyme A synthetase of Parvibaculum lavamentivorans (strain DS-1 / DSM 13023 / NCIMB 13966).